We begin with the raw amino-acid sequence, 476 residues long: Ribulose bisphosphate carboxylase large chain (476 aa).

Positions 124 and 174 each coordinate substrate. Residue lysine 176 is the Proton acceptor of the active site. Lysine 178 contacts substrate. Mg(2+) contacts are provided by lysine 202, aspartate 204, and glutamate 205. Lysine 202 is modified (N6-carboxylysine). The active-site Proton acceptor is histidine 295. Substrate-binding residues include arginine 296, histidine 328, and serine 380.

This sequence belongs to the RuBisCO large chain family. Type I subfamily. Heterohexadecamer of 8 large chains and 8 small chains; disulfide-linked. The disulfide link is formed within the large subunit homodimers. Requires Mg(2+) as cofactor. Post-translationally, the disulfide bond which can form in the large chain dimeric partners within the hexadecamer appears to be associated with oxidative stress and protein turnover.

The protein resides in the carboxysome. The catalysed reaction is 2 (2R)-3-phosphoglycerate + 2 H(+) = D-ribulose 1,5-bisphosphate + CO2 + H2O. It carries out the reaction D-ribulose 1,5-bisphosphate + O2 = 2-phosphoglycolate + (2R)-3-phosphoglycerate + 2 H(+). In terms of biological role, ruBisCO catalyzes two reactions: the carboxylation of D-ribulose 1,5-bisphosphate, the primary event in carbon dioxide fixation, as well as the oxidative fragmentation of the pentose substrate in the photorespiration process. Both reactions occur simultaneously and in competition at the same active site. The protein is Ribulose bisphosphate carboxylase large chain of Trichodesmium erythraeum (strain IMS101).